A 224-amino-acid polypeptide reads, in one-letter code: Cytidylate kinase (224 aa).

Position 10 to 18 (10 to 18 (GPASAGKST)) interacts with ATP.

This sequence belongs to the cytidylate kinase family. Type 1 subfamily.

The protein localises to the cytoplasm. It carries out the reaction CMP + ATP = CDP + ADP. The catalysed reaction is dCMP + ATP = dCDP + ADP. The chain is Cytidylate kinase from Leuconostoc mesenteroides subsp. mesenteroides (strain ATCC 8293 / DSM 20343 / BCRC 11652 / CCM 1803 / JCM 6124 / NCDO 523 / NBRC 100496 / NCIMB 8023 / NCTC 12954 / NRRL B-1118 / 37Y).